Consider the following 414-residue polypeptide: Probable elongation factor 1-gamma 1 (414 aa).

A GST N-terminal domain is found at 1–82 (MALVLHTYKG…YVSRLNGDNS (82 aa)). A GST C-terminal domain is found at 87–215 (SLIEYAQIEQ…VKQTEAVPPI (129 aa)). The segment covering 214 to 224 (PIASKKAAQPA) has biased composition (low complexity). Residues 214–260 (PIASKKAAQPAKPKEEPKKKEAPVAEAPKLAEEEEAPKPKAKNPLDL) form a disordered region. The span at 225–236 (KPKEEPKKKEAP) shows a compositional bias: basic and acidic residues. The 161-residue stretch at 254–414 (AKNPLDLLPP…EALLDAKCFK (161 aa)) folds into the EF-1-gamma C-terminal domain.

As to quaternary structure, EF-1 is composed of four subunits: alpha, beta, delta, and gamma.

Its function is as follows. Probably plays a role in anchoring the complex to other cellular components. The sequence is that of Probable elongation factor 1-gamma 1 from Arabidopsis thaliana (Mouse-ear cress).